A 344-amino-acid polypeptide reads, in one-letter code: GTPase Obg (344 aa).

Residues 1–159 (MKFLDQAKVY…RWIWLRLKLI (159 aa)) enclose the Obg domain. Residues 160–327 (ADAGLVGLPN…ALRLLLSVVE (168 aa)) form the OBG-type G domain. GTP contacts are provided by residues 166–173 (GLPNAGKS), 191–195 (FTTLH), 212–215 (DIPG), 279–282 (SKVD), and 308–310 (SAQ). Residues Ser-173 and Thr-193 each coordinate Mg(2+).

The protein belongs to the TRAFAC class OBG-HflX-like GTPase superfamily. OBG GTPase family. In terms of assembly, monomer. Mg(2+) is required as a cofactor.

The protein resides in the cytoplasm. In terms of biological role, an essential GTPase which binds GTP, GDP and possibly (p)ppGpp with moderate affinity, with high nucleotide exchange rates and a fairly low GTP hydrolysis rate. Plays a role in control of the cell cycle, stress response, ribosome biogenesis and in those bacteria that undergo differentiation, in morphogenesis control. The protein is GTPase Obg of Xanthobacter autotrophicus (strain ATCC BAA-1158 / Py2).